Consider the following 554-residue polypeptide: MSVKQIAFGSKVGESLLNGVIKLANCVQVTLGPNGRNVLIEQSFGDPRVTKDGVTVAKHVELEDRYENLAAQLVKSVASKTADMVGDGTTTATVLARSIYSEAFKGTSAGMNSMELRAGIDHAVEIVVEKLKELSIPVKGDYQKISQVATVSANGDTEIGDMIAQAMEKVGSDGVITVEEAKSFKTELDVVPGMQFDRGYISPYFITRQDKGIAELERSYILLYDGKISSAQSLLPVLEKCAKESASLLIIAEDVEGEALRMLVVNKLRGVLKVAAVKSPGFGDRRKAMLGDIAVLTNGYVVSSEVGMRLEDVRIEDLGRADTIVIEKDNTTVIVNGPARSSVKERCDKIRSEIQEATSDYDKEKLQERLAKLSGGVAVIRVGGATEVELKERKDRVEDAMHATKAAVEEGIIPGGGTAFLRCVKPLEEVIKSAKVQERGRDFICGIDAVRKALSSPCYQIASNAGKEGGVVVAEVLKASDVNVGYDARHDQYVDMIKSGIIDPTKVARTALQNAGSVAGLLNTTEVIIAQVPEKEKPNMGGGMGGGMGGGMDF.

ATP contacts are provided by residues 30–33 (TLGP), Lys-51, 87–91 (DGTTT), Gly-416, and Asp-503.

This sequence belongs to the chaperonin (HSP60) family. Forms a cylinder of 14 subunits composed of two heptameric rings stacked back-to-back. Interacts with the co-chaperonin GroES.

It is found in the cytoplasm. The enzyme catalyses ATP + H2O + a folded polypeptide = ADP + phosphate + an unfolded polypeptide.. Its function is as follows. Together with its co-chaperonin GroES, plays an essential role in assisting protein folding. The GroEL-GroES system forms a nano-cage that allows encapsulation of the non-native substrate proteins and provides a physical environment optimized to promote and accelerate protein folding. The protein is Chaperonin GroEL of Holospora obtusa.